A 103-amino-acid polypeptide reads, in one-letter code: MHKLTPDEAIDIAYDIFLEMAGEHLEPADILLFNLQFEERGAVEMVETSDRWEEEIGTLIDPTAFAEVWVGLVNDKDEMDDVFARFLISHQAENREYHVIWKE.

This sequence belongs to the putative dsDNA mimic protein family.

Its function is as follows. May act as a double-stranded DNA (dsDNA) mimic. Probably regulates the activity of a dsDNA-binding protein. This Haemophilus ducreyi (strain 35000HP / ATCC 700724) protein is Putative double-stranded DNA mimic protein HD_0986.